The primary structure comprises 367 residues: Quinolinate synthase (367 aa).

Iminosuccinate-binding residues include H46 and S63. C110 contacts [4Fe-4S] cluster. Residues 141-143 (YVN) and S162 each bind iminosuccinate. Residue C229 coordinates [4Fe-4S] cluster. Residues 255–257 (HPE) and T272 each bind iminosuccinate. A [4Fe-4S] cluster-binding site is contributed by C319.

This sequence belongs to the quinolinate synthase family. Type 3 subfamily. The cofactor is [4Fe-4S] cluster.

It is found in the cytoplasm. It carries out the reaction iminosuccinate + dihydroxyacetone phosphate = quinolinate + phosphate + 2 H2O + H(+). It functions in the pathway cofactor biosynthesis; NAD(+) biosynthesis; quinolinate from iminoaspartate: step 1/1. In terms of biological role, catalyzes the condensation of iminoaspartate with dihydroxyacetone phosphate to form quinolinate. This chain is Quinolinate synthase, found in Bacillus velezensis (strain DSM 23117 / BGSC 10A6 / LMG 26770 / FZB42) (Bacillus amyloliquefaciens subsp. plantarum).